We begin with the raw amino-acid sequence, 182 residues long: Adenine phosphoribosyltransferase (182 aa).

Belongs to the purine/pyrimidine phosphoribosyltransferase family. In terms of assembly, homodimer.

Its subcellular location is the cytoplasm. It carries out the reaction AMP + diphosphate = 5-phospho-alpha-D-ribose 1-diphosphate + adenine. It participates in purine metabolism; AMP biosynthesis via salvage pathway; AMP from adenine: step 1/1. Its function is as follows. Catalyzes a salvage reaction resulting in the formation of AMP, that is energically less costly than de novo synthesis. The chain is Adenine phosphoribosyltransferase from Sulfurimonas denitrificans (strain ATCC 33889 / DSM 1251) (Thiomicrospira denitrificans (strain ATCC 33889 / DSM 1251)).